Consider the following 348-residue polypeptide: Phosphoribosylformylglycinamidine cyclo-ligase (348 aa).

It belongs to the AIR synthase family.

The protein localises to the cytoplasm. The enzyme catalyses 2-formamido-N(1)-(5-O-phospho-beta-D-ribosyl)acetamidine + ATP = 5-amino-1-(5-phospho-beta-D-ribosyl)imidazole + ADP + phosphate + H(+). It participates in purine metabolism; IMP biosynthesis via de novo pathway; 5-amino-1-(5-phospho-D-ribosyl)imidazole from N(2)-formyl-N(1)-(5-phospho-D-ribosyl)glycinamide: step 2/2. The chain is Phosphoribosylformylglycinamidine cyclo-ligase from Cereibacter sphaeroides (strain KD131 / KCTC 12085) (Rhodobacter sphaeroides).